Here is a 151-residue protein sequence, read N- to C-terminus: Putative esterase VNG_1336C (151 aa).

It belongs to the thioesterase PaaI family.

The polypeptide is Putative esterase VNG_1336C (Halobacterium salinarum (strain ATCC 700922 / JCM 11081 / NRC-1) (Halobacterium halobium)).